Here is a 316-residue protein sequence, read N- to C-terminus: Phospholipase A1 4 (316 aa).

The N-terminal stretch at 1–4 (ADDL) is a signal peptide. Positions 5–14 (TTLRNGTLDR) are excised as a propeptide. An intrachain disulfide couples Cys20 to Cys103. Residue Ser153 is the Nucleophile of the active site. Asp181 acts as the Charge relay system in catalysis. 2 disulfides stabilise this stretch: Cys192/Cys197 and Cys235/Cys240. His242 (charge relay system) is an active-site residue. Disulfide bonds link Cys257–Cys284, Cys258–Cys309, and Cys277–Cys282.

The protein belongs to the AB hydrolase superfamily. Lipase family. Expressed by the venom gland.

It is found in the secreted. The catalysed reaction is a 1,2-diacyl-sn-glycero-3-phosphocholine + H2O = a 2-acyl-sn-glycero-3-phosphocholine + a fatty acid + H(+). Catalyzes the hydrolysis of phosphatidylcholine with phospholipase A1 activity. May act as an allergen and induce hemolytic activity. The polypeptide is Phospholipase A1 4 (Polistes dominula (European paper wasp)).